We begin with the raw amino-acid sequence, 123 residues long: Holo-[acyl-carrier-protein] synthase (123 aa).

Asp8 and Glu50 together coordinate Mg(2+).

This sequence belongs to the P-Pant transferase superfamily. AcpS family. The cofactor is Mg(2+).

Its subcellular location is the cytoplasm. It carries out the reaction apo-[ACP] + CoA = holo-[ACP] + adenosine 3',5'-bisphosphate + H(+). Its function is as follows. Transfers the 4'-phosphopantetheine moiety from coenzyme A to a Ser of acyl-carrier-protein. This Kocuria rhizophila (strain ATCC 9341 / DSM 348 / NBRC 103217 / DC2201) protein is Holo-[acyl-carrier-protein] synthase.